Consider the following 168-residue polypeptide: MSVTLHTNVGDIKVEVFCDATPRAAENFLGHCAAGTYNDVKWHRNIKSFMIQTGDPTGTGKGGQSIWGKPFADEIRSSLKFDRRGIVACANAGPDTNKSQFFITYAKQPHLDGKYTIIGKVIDGAEDGGTLDAMEAIPVDAKNRPTSEIRMTGVTVHANPIAIKAAGK.

Residues 1 to 156 form the PPIase cyclophilin-type domain; the sequence is MSVTLHTNVG…SEIRMTGVTV (156 aa).

This sequence belongs to the cyclophilin-type PPIase family. PPIL3 subfamily.

The catalysed reaction is [protein]-peptidylproline (omega=180) = [protein]-peptidylproline (omega=0). Functionally, PPIases accelerate the folding of proteins. It catalyzes the cis-trans isomerization of proline imidic peptide bonds in oligopeptides. The polypeptide is Peptidyl-prolyl cis-trans isomerase-like 3 (CYP10) (Mycosarcoma maydis (Corn smut fungus)).